Here is a 519-residue protein sequence, read N- to C-terminus: Aldehyde dehydrogenase, mitochondrial (519 aa).

Residues 1 to 19 (MLRAALSTARRGPRLSRLL) constitute a mitochondrion transit peptide. The short motif at 12–26 (GPRLSRLLSAAATSA) is the SIFI-degron element. An N6-acetyllysine mark is found at K54, K75, K80, and K161. 264–269 (GSTEVG) contacts NAD(+). E287 functions as the Proton acceptor in the catalytic mechanism. The active-site Nucleophile is C321. K370, K377, K385, K409, K428, K430, K443, and K453 each carry N6-acetyllysine.

This sequence belongs to the aldehyde dehydrogenase family. In terms of assembly, homotetramer. In response to mitochondrial stress, the precursor protein is ubiquitinated by the SIFI complex in the cytoplasm before mitochondrial import, leading to its degradation. Within the SIFI complex, UBR4 initiates ubiquitin chain that are further elongated or branched by KCMF1.

Its subcellular location is the mitochondrion matrix. The enzyme catalyses an aldehyde + NAD(+) + H2O = a carboxylate + NADH + 2 H(+). The protein operates within alcohol metabolism; ethanol degradation; acetate from ethanol: step 2/2. Required for clearance of cellular formaldehyde, a cytotoxic and carcinogenic metabolite that induces DNA damage. The protein is Aldehyde dehydrogenase, mitochondrial (Aldh2) of Rattus norvegicus (Rat).